The primary structure comprises 264 residues: Tritrans,polycis-undecaprenyl-diphosphate synthase (geranylgeranyl-diphosphate specific) (264 aa).

Aspartate 43 is a catalytic residue. Residue aspartate 43 coordinates Mg(2+). Residues 44 to 47 (GNRR), tryptophan 48, histidine 60, and 88 to 90 (STE) each bind substrate. The active-site Proton acceptor is asparagine 91. Residues phenylalanine 92, arginine 94, arginine 213, and 219–221 (RIS) each bind substrate. Residue glutamate 232 participates in Mg(2+) binding.

The protein belongs to the UPP synthase family. Homodimer. The cofactor is Mg(2+).

The catalysed reaction is geranylgeranyl diphosphate + 7 isopentenyl diphosphate = tri-trans,hepta-cis-undecaprenyl diphosphate + 7 diphosphate. In terms of biological role, catalyzes the sequential condensation of isopentenyl diphosphate (IPP) with geranylgeranyl diphosphate (GGPP) to yield (2Z,6Z,10Z,14Z,18Z,22Z,26Z,30E,34E,38E)-undecaprenyl diphosphate (tritrans,heptacis-UPP). It is probably the precursor of glycosyl carrier lipids. This chain is Tritrans,polycis-undecaprenyl-diphosphate synthase (geranylgeranyl-diphosphate specific), found in Thermococcus kodakarensis (strain ATCC BAA-918 / JCM 12380 / KOD1) (Pyrococcus kodakaraensis (strain KOD1)).